The sequence spans 208 residues: Uridine kinase (208 aa).

12-19 (GGSGGGKT) is an ATP binding site.

The protein belongs to the uridine kinase family.

The protein localises to the cytoplasm. It catalyses the reaction uridine + ATP = UMP + ADP + H(+). The catalysed reaction is cytidine + ATP = CMP + ADP + H(+). The protein operates within pyrimidine metabolism; CTP biosynthesis via salvage pathway; CTP from cytidine: step 1/3. Its pathway is pyrimidine metabolism; UMP biosynthesis via salvage pathway; UMP from uridine: step 1/1. The chain is Uridine kinase from Streptococcus pyogenes serotype M18 (strain MGAS8232).